Reading from the N-terminus, the 208-residue chain is Ribosomal RNA large subunit methyltransferase E (208 aa).

The S-adenosyl-L-methionine site is built by Gly63, Trp65, Asp83, Asp99, and Asp124. Catalysis depends on Lys164, which acts as the Proton acceptor.

This sequence belongs to the class I-like SAM-binding methyltransferase superfamily. RNA methyltransferase RlmE family.

It is found in the cytoplasm. It carries out the reaction uridine(2552) in 23S rRNA + S-adenosyl-L-methionine = 2'-O-methyluridine(2552) in 23S rRNA + S-adenosyl-L-homocysteine + H(+). Specifically methylates the uridine in position 2552 of 23S rRNA at the 2'-O position of the ribose in the fully assembled 50S ribosomal subunit. The protein is Ribosomal RNA large subunit methyltransferase E of Blochmanniella pennsylvanica (strain BPEN).